Consider the following 287-residue polypeptide: Orotidine 5'-phosphate decarboxylase (287 aa).

Lys99 serves as the catalytic Proton donor.

Belongs to the OMP decarboxylase family. Type 2 subfamily.

The enzyme catalyses orotidine 5'-phosphate + H(+) = UMP + CO2. The protein operates within pyrimidine metabolism; UMP biosynthesis via de novo pathway; UMP from orotate: step 2/2. This is Orotidine 5'-phosphate decarboxylase from Clostridium novyi (strain NT).